A 181-amino-acid polypeptide reads, in one-letter code: Transcription termination/antitermination protein NusG (181 aa).

Residues 130–161 (PGEMVRVNDGPFADFNGVVEEVDYEKSRLKVS) enclose the KOW domain.

The protein belongs to the NusG family. In terms of assembly, monomer. Interacts with the transcription termination factor Rho and with RNA polymerase.

Participates in transcription elongation, termination and antitermination. In the absence of Rho, increases the rate of transcription elongation by the RNA polymerase (RNAP), probably by partially suppressing pausing. In the presence of Rho, modulates most Rho-dependent termination events by interacting with the RNAP to render the complex more susceptible to the termination activity of Rho. May be required to overcome a kinetic limitation of Rho to function at certain terminators. Also involved in ribosomal RNA transcriptional antitermination. The chain is Transcription termination/antitermination protein NusG from Shigella flexneri.